A 767-amino-acid chain; its full sequence is Protein transport protein Sec23B (767 aa).

Alanine 2 is modified (N-acetylalanine). Cysteine 61, cysteine 66, cysteine 85, and cysteine 88 together coordinate Zn(2+). Lysine 564 is modified (N6-acetyllysine). The stretch at 634–720 (PEPVLLDSSS…EHGGSQARFL (87 aa)) is one Gelsolin-like repeat.

The protein belongs to the SEC23/SEC24 family. SEC23 subfamily. In terms of assembly, COPII is composed of at least five proteins: the Sec23/24 complex, the Sec13/31 complex and Sar1. Interacts with SAR1A. As to expression, ubiquitously expressed.

It is found in the cytoplasmic vesicle. The protein resides in the COPII-coated vesicle membrane. Its subcellular location is the endoplasmic reticulum membrane. It localises to the cytoplasm. The protein localises to the cytosol. Its function is as follows. Component of the coat protein complex II (COPII) which promotes the formation of transport vesicles from the endoplasmic reticulum (ER). The coat has two main functions, the physical deformation of the endoplasmic reticulum membrane into vesicles and the selection of cargo molecules for their transport to the Golgi complex. The polypeptide is Protein transport protein Sec23B (Homo sapiens (Human)).